The sequence spans 308 residues: Aliphatic nitrilase (308 aa).

A CN hydrolase domain is found at 4–270; sequence FRAAVVQAAP…ETILTADLDT (267 aa). Glu44 functions as the Proton acceptor in the catalytic mechanism. Lys130 is an active-site residue. The active-site Nucleophile is Cys164.

This sequence belongs to the carbon-nitrogen hydrolase superfamily. Nitrilase family.

The enzyme catalyses a nitrile + 2 H2O = a carboxylate + NH4(+). Functionally, nitrilase that hydrolyzes preferentially phenylacetonitrile, but not (R,S)-mandelonitrile. Also acts on dinitriles like phenylenediacetonitriles (PDAs) 1,2-PDA, 1,3-PDA, and 1,4-PDA, and cyanophenyl acetonitriles (CPAs) 2-CPA and 4-CPA, but with lower activities. This is Aliphatic nitrilase (nit) from Sinorhizobium fredii (strain HH103).